Here is a 270-residue protein sequence, read N- to C-terminus: Formamidopyrimidine-DNA glycosylase (270 aa).

P2 functions as the Schiff-base intermediate with DNA in the catalytic mechanism. The Proton donor role is filled by E3. Catalysis depends on K58, which acts as the Proton donor; for beta-elimination activity. The DNA site is built by H92, R111, and R153. Residues 238–270 (SVYGASVCPVCGGALRQIRLAQRGTWFCPRCQR) form an FPG-type zinc finger. The Proton donor; for delta-elimination activity role is filled by R260.

It belongs to the FPG family. Monomer. Requires Zn(2+) as cofactor.

The catalysed reaction is Hydrolysis of DNA containing ring-opened 7-methylguanine residues, releasing 2,6-diamino-4-hydroxy-5-(N-methyl)formamidopyrimidine.. The enzyme catalyses 2'-deoxyribonucleotide-(2'-deoxyribose 5'-phosphate)-2'-deoxyribonucleotide-DNA = a 3'-end 2'-deoxyribonucleotide-(2,3-dehydro-2,3-deoxyribose 5'-phosphate)-DNA + a 5'-end 5'-phospho-2'-deoxyribonucleoside-DNA + H(+). Functionally, involved in base excision repair of DNA damaged by oxidation or by mutagenic agents. Acts as a DNA glycosylase that recognizes and removes damaged bases. Has a preference for oxidized purines, such as 7,8-dihydro-8-oxoguanine (8-oxoG). Has AP (apurinic/apyrimidinic) lyase activity and introduces nicks in the DNA strand. Cleaves the DNA backbone by beta-delta elimination to generate a single-strand break at the site of the removed base with both 3'- and 5'-phosphates. The polypeptide is Formamidopyrimidine-DNA glycosylase (Halorhodospira halophila (strain DSM 244 / SL1) (Ectothiorhodospira halophila (strain DSM 244 / SL1))).